The sequence spans 119 residues: Large ribosomal subunit protein uL14 (119 aa).

This sequence belongs to the universal ribosomal protein uL14 family. Part of the 50S ribosomal subunit. Forms a cluster with proteins L3 and L19. In the 70S ribosome, L14 and L19 interact and together make contacts with the 16S rRNA in bridges B5 and B8.

Its function is as follows. Binds to 23S rRNA. Forms part of two intersubunit bridges in the 70S ribosome. The polypeptide is Large ribosomal subunit protein uL14 (Anaplasma phagocytophilum (strain HZ)).